The chain runs to 149 residues: uncharacterized protein (149 aa).

Residues 1 to 15 (MQRQTGHMEDKKRTG) are compositionally biased toward basic and acidic residues. The interval 1–32 (MQRQTGHMEDKKRTGLESQGTENAFSDGRDGK) is disordered.

This is an uncharacterized protein from Gallus gallus (Chicken).